The primary structure comprises 72 residues: DNA gyrase inhibitor YacG (72 aa).

Zn(2+)-binding residues include cysteine 14, cysteine 17, cysteine 33, and cysteine 37.

The protein belongs to the DNA gyrase inhibitor YacG family. As to quaternary structure, interacts with GyrB. Zn(2+) is required as a cofactor.

In terms of biological role, inhibits all the catalytic activities of DNA gyrase by preventing its interaction with DNA. Acts by binding directly to the C-terminal domain of GyrB, which probably disrupts DNA binding by the gyrase. The sequence is that of DNA gyrase inhibitor YacG from Mannheimia succiniciproducens (strain KCTC 0769BP / MBEL55E).